Consider the following 288-residue polypeptide: Glycine--tRNA ligase alpha subunit (288 aa).

This sequence belongs to the class-II aminoacyl-tRNA synthetase family. Tetramer of two alpha and two beta subunits.

It localises to the cytoplasm. It catalyses the reaction tRNA(Gly) + glycine + ATP = glycyl-tRNA(Gly) + AMP + diphosphate. The sequence is that of Glycine--tRNA ligase alpha subunit from Desulfatibacillum aliphaticivorans.